Consider the following 296-residue polypeptide: Ribosomal RNA small subunit methyltransferase A (296 aa).

Residues Asn32, Leu34, Gly59, Glu80, Asp105, and Asn130 each coordinate S-adenosyl-L-methionine.

The protein belongs to the class I-like SAM-binding methyltransferase superfamily. rRNA adenine N(6)-methyltransferase family. RsmA subfamily.

The protein resides in the cytoplasm. The catalysed reaction is adenosine(1518)/adenosine(1519) in 16S rRNA + 4 S-adenosyl-L-methionine = N(6)-dimethyladenosine(1518)/N(6)-dimethyladenosine(1519) in 16S rRNA + 4 S-adenosyl-L-homocysteine + 4 H(+). In terms of biological role, specifically dimethylates two adjacent adenosines (A1518 and A1519) in the loop of a conserved hairpin near the 3'-end of 16S rRNA in the 30S particle. May play a critical role in biogenesis of 30S subunits. The protein is Ribosomal RNA small subunit methyltransferase A of Levilactobacillus brevis (strain ATCC 367 / BCRC 12310 / CIP 105137 / JCM 1170 / LMG 11437 / NCIMB 947 / NCTC 947) (Lactobacillus brevis).